Consider the following 203-residue polypeptide: Histone deacetylase HDT4 (203 aa).

Positions 2–5 (EFWG) are required to repress transcription. A disordered region spans residues 121–203 (AALPQNEINP…PFPCGPSCKK (83 aa)). The segment covering 129–157 (NPEEDDESDSDEMGLDEDDDSSDEEDVEA) has biased composition (acidic residues). The span at 180–193 (GGKKNKSSGGKKRC) shows a compositional bias: basic residues.

The protein belongs to the histone deacetylase HD2 family. As to expression, confined to stems and flowers with young siliques.

The protein localises to the nucleus. It is found in the nucleolus. In terms of biological role, probably mediates the deacetylation of lysine residues lysine residues on the N-terminal part of the core histones (H2A, H2B, H3 and H4). Histone deacetylation gives a tag for epigenetic repression and plays an important role in transcriptional regulation, cell cycle progression and developmental events. This chain is Histone deacetylase HDT4 (HDT4), found in Arabidopsis thaliana (Mouse-ear cress).